We begin with the raw amino-acid sequence, 1013 residues long: EF-hand calcium-binding domain-containing protein 6 (1013 aa).

EF-hand domains are found at residues 20–55, 145–180, 251–286, 287–322, and 352–387; these read KNIK…FCLK, KSYE…FIYQ, DRSA…VAIK, LSDS…NCRM, and RNLQ…FCPF. The tract at residues 441 to 460 is disordered; sequence QKDEQQQPDLSERTKPTEDK. 6 consecutive EF-hand domains span residues 482-517, 589-624, 695-730, 731-766, 812-847, and 917-952; these read QQDP…TGMP, ESFR…LLLN, NRWS…FDIP, LTPR…NYSP, DLHQ…CGCS, and SSQL…FCYK. Positions 602, 604, 606, and 613 each coordinate Ca(2+). Thr-732 bears the Phosphothreonine mark.

As to quaternary structure, microtubule inner protein component of sperm flagellar doublet microtubules. Binds PARK7. Part of a ternary complex containing PARK7, EFCAB6/DJBP and AR.

It is found in the nucleus. Its subcellular location is the cytoplasm. The protein resides in the cytoskeleton. It localises to the flagellum axoneme. Negatively regulates the androgen receptor by recruiting histone deacetylase complex, and protein DJ-1 antagonizes this inhibition by abrogation of this complex. Microtubule inner protein (MIP) part of the dynein-decorated doublet microtubules (DMTs) in cilia axoneme, which is required for motile cilia beating. The protein is EF-hand calcium-binding domain-containing protein 6 (EFCAB6) of Pongo abelii (Sumatran orangutan).